Reading from the N-terminus, the 159-residue chain is MSYSITSPSQFVFLSSVWADPIELLNVCTNSLGNQFQTQQARTTVQQQFSEVWKPFPQSTVRFPGDVYKVYRYNAVLDPLITALLGAFDTRNRIIEVENQQSPTTAETLDATRRVDDATVAIRSAINNLVNELVRGTGLYNQNTFESMSGLVWTSAPAS.

At S2 the chain carries N-acetylserine; by host.

The protein belongs to the virgaviridae capsid protein family.

Its subcellular location is the virion. Functionally, capsid protein self-assembles to form rod-shaped virions about 18 nm in diameter with a central canal enclosing the viral genomic RNA. This chain is Capsid protein (CP), found in Tomato mosaic virus (strain L) (ToMV).